Here is an 83-residue protein sequence, read N- to C-terminus: Aspergillic acid biosynthesis cluster protein F (83 aa).

Its pathway is secondary metabolite biosynthesis. Its function is as follows. Part of the gene cluster that mediates the biosynthesis of aspergillic acid, a hydroxamic acid-containing pyrazinone with aliphatic side chains that originates from leucine (Leu) and isoleucine (Ile). Aspergillic acid has antibiotic properties and was shown to be lethal to mice. The first step in the pathway is the production of deoxyaspergillic acid via a condensation between the Ile amine and the Leu carboxylic acid, followed by a reductive release from the protein forming the dipeptide aldehyde NH(2)-Leu-Ile-CHO, which could undergo an intermolecular cyclization resulting in a dihydropyrazinone. As the NRPS asaC lacks a condensation domain, it is improbable that it is responsible for condensation of Leu and Ile. One possibility is that asaC acts on a previously condensed dipeptide and functions as a Leu-Ile reductase to yield deoxyaspergillic acid. After asaC forms deoxyaspergillic acid, the cytochrome P450 asaD oxidizes the pyrazinone to the hydroxamic acid-containing bioactive metabolite aspergillic acid. The hydroxylase/desaturase asaB can then convert aspergillic acid to hydroxyaspergillic acid. Both aspergillic acid and hydroxyaspergillic acid can form complexes with iron producing ferriaspergillin analogs. In Aspergillus flavus (strain ATCC 200026 / FGSC A1120 / IAM 13836 / NRRL 3357 / JCM 12722 / SRRC 167), this protein is Aspergillic acid biosynthesis cluster protein F.